Reading from the N-terminus, the 245-residue chain is 3-deoxy-manno-octulosonate cytidylyltransferase (245 aa).

Belongs to the KdsB family.

It is found in the cytoplasm. The catalysed reaction is 3-deoxy-alpha-D-manno-oct-2-ulosonate + CTP = CMP-3-deoxy-beta-D-manno-octulosonate + diphosphate. It functions in the pathway nucleotide-sugar biosynthesis; CMP-3-deoxy-D-manno-octulosonate biosynthesis; CMP-3-deoxy-D-manno-octulosonate from 3-deoxy-D-manno-octulosonate and CTP: step 1/1. Its pathway is bacterial outer membrane biogenesis; lipopolysaccharide biosynthesis. Its function is as follows. Activates KDO (a required 8-carbon sugar) for incorporation into bacterial lipopolysaccharide in Gram-negative bacteria. This Fusobacterium nucleatum subsp. nucleatum (strain ATCC 25586 / DSM 15643 / BCRC 10681 / CIP 101130 / JCM 8532 / KCTC 2640 / LMG 13131 / VPI 4355) protein is 3-deoxy-manno-octulosonate cytidylyltransferase.